We begin with the raw amino-acid sequence, 287 residues long: 4-hydroxybenzoate octaprenyltransferase (287 aa).

9 consecutive transmembrane segments (helical) span residues 21–41 (VGIF…AKGA), 44–64 (FKIA…GCIV), 91–111 (VTEA…LVLL), 112–132 (LNRL…VYPF), 139–159 (LPQL…FAAT), 160–180 (VGHV…WPIV), 211–231 (LMIG…GWYL), 235–255 (YWFY…QFLI), and 263–283 (CFAA…GILL).

This sequence belongs to the UbiA prenyltransferase family. It depends on Mg(2+) as a cofactor.

It localises to the cell inner membrane. It catalyses the reaction all-trans-octaprenyl diphosphate + 4-hydroxybenzoate = 4-hydroxy-3-(all-trans-octaprenyl)benzoate + diphosphate. Its pathway is cofactor biosynthesis; ubiquinone biosynthesis. Functionally, catalyzes the prenylation of para-hydroxybenzoate (PHB) with an all-trans polyprenyl group. Mediates the second step in the final reaction sequence of ubiquinone-8 (UQ-8) biosynthesis, which is the condensation of the polyisoprenoid side chain with PHB, generating the first membrane-bound Q intermediate 3-octaprenyl-4-hydroxybenzoate. This Coxiella burnetii (strain CbuK_Q154) (Coxiella burnetii (strain Q154)) protein is 4-hydroxybenzoate octaprenyltransferase.